The primary structure comprises 621 residues: tRNA uridine 5-carboxymethylaminomethyl modification enzyme MnmG (621 aa).

FAD is bound at residue 8–13 (GAGHAG). A disordered region spans residues 199–227 (PRIDRRSVDYSRVEEQKGDENPPPFSFST). The span at 200–218 (RIDRRSVDYSRVEEQKGDE) shows a compositional bias: basic and acidic residues. NAD(+) is bound at residue 269-283 (GPRYCPSIEDKIFRF).

It belongs to the MnmG family. In terms of assembly, homodimer. Heterotetramer of two MnmE and two MnmG subunits. FAD is required as a cofactor.

It localises to the cytoplasm. Functionally, NAD-binding protein involved in the addition of a carboxymethylaminomethyl (cmnm) group at the wobble position (U34) of certain tRNAs, forming tRNA-cmnm(5)s(2)U34. The chain is tRNA uridine 5-carboxymethylaminomethyl modification enzyme MnmG from Chlorobium luteolum (strain DSM 273 / BCRC 81028 / 2530) (Pelodictyon luteolum).